The primary structure comprises 1907 residues: MVWGTGYGNPSPLNPYGFASLHRGGLNPLILAPENITFDTLNTHNDHEETHGESPEVPKASIAPAGRQNVPVLQQNQENEDNHALGGSEDAKDEREIRFSAIKTLYNYYSEGPSTPIMPHLVNRLRGLDALAKIDATLTKVDMNAAYIFALRPTFPYSYGYKQRFSNRRLTTSALCYARTGLSSFLTVDKTYTSNSPLKGGSRGWPIFNVDVSSHVAEPHMRTLSPIGLEVFNLATSQFSKTLLTASSKVFTQSLYTADILSIFGEVFLPHVMQPVSNYTPILVRALLALIHILGPGSGNCSLSSSIFESSIPQFLTVSHSTNMSNRTRYCLHTRSAYKDMFRNGIPPQSTLPPTLAPEGSSARVLIPEALVTSPMFPWLLILVSSGPQFFLYSKDASINTVDIGSRGRITSPIPDVAKLDLHRLWNLFRFDGYRYIDVVIVGADRDYVWPYQNGVYVHGGKGPNGTGNYGNADVHDGIGTIFSSFNNNVNVQTSDLMLGLLTLWNHITTTYATEEEVTMAIKIAAAFALVYPVQPIVYSGCPKAFQRHTSYYQPSSENCYATDTAEVKSVWDTVELSVQVNNAMVLGMTLPFGQPTLSSAQWYNNIDKAEISMFKVGNLPLQNLDYLSLDMMEFYAPTTGQLYDIRSDNLILSAHRTVNLGIGYTALADFFAYLASVPAQSFYHDRMVTSPISKQTYSVYERFIERFIDDFVGWDRCDLFNLDTLLGAKHIAGVASSPIPWHCSLQRCPLPIIMHYTGLTFGQEHITVRDVAGVEGLQQIVMRDFQGRIVVERLGTAAPSRIAVKLDWSRLSAWYSDTTCAIPLIRSCDGDRQLRGNMGSYTGKTRTGFVYTYFSPNFLSSFNVSEPIFNTSINLTPPYDDTSQAVIQNLSMPQMLSFDPYYESTFYVVSADNEWIPTSGPAWKVPYLENVVKRSGRRLLAELRIASNNGSGDRTFLTTCKTRKGRHFTYFSAALGGKILEFVCAPLSSISLQGGQTIYAPIQLQDVIPVRKEDPVPGSIYAVFKFFSEPKAWEARALKSYKVRFQDLPSHIVISELKERAARSYIGSRGYVDTGFKALDIYIDILSQMELPKYIHEFLILLRGKVCEVSRLYKKEQVFVILLTVFSELTAIVRHRGNKSTGSMGRMWTLLSDFETLLGKVSYKNPSIIEEQVVPWLTSDPIPRTPDFYSTYFKTAVQFMHRTFVPVTLRSAPPLTFHEYCGRPELWGTTGSGYIGYGKRSFNKWSIYGAYPTEEIYRLALYGDNPPLKPLEKPELTKVRAVISASLQSYILMSYLEYIMADTIVDKAFTTTLMNDRQLENLERHMMTMTGGVRVPVDQSNFDRQPDLVQIGIWQQLLFHLASASAPYRARDSVSLVISRLASTTTFPNLKVRMSDGDKRVLHGLPSGWKWTALLGALINVTQLLTMAELSNTLASLRSTVVQGDDIALSMTDREQATQLVDTYARQGFEVNPKKFWISPDRDEFLRRVATPGIVAGYPARMMIKLLYQLTEPEEPSHYISMLPKLAKVPNVVQEHVKPRSDVPWSETVEELDWREALAILRHRPARTSELVTQWLQLIGRFTAAHPDKRALTLLYRWFVRDLTHATKIKKRNLLVLLQQPGFWGGYSQSLVGLLRTTHLADMIVSELDIGLPGPRATSSRFGTSPTSLAPHYLTLIVPSSVHVQSQKELDLWGLCRSSKYAKHYSNIFRYYKLTLPTLVLWAQRLGDKHVTDFIRSVTLGSEIPKYDPHARLFTSNGVSVGMLIRIRVRHFTHRVLRRETPKCIPVIVGLYREQTLSVPESVRLSEPDKILLSLQRASGYSLNLVKKILQITRKPVDHPVDARFSQAFPNNWSDLARTAGTFLLTVPAEVSGDNADLVPERLGFNHSSWLHAIFRSRKFLLCVVA.

Residues 42 to 61 (NTHNDHEETHGESPEVPKAS) are disordered. Over residues 44–56 (HNDHEETHGESPE) the composition is skewed to basic and acidic residues.

This sequence belongs to the totiviridae RNA-directed RNA polymerase family.

It catalyses the reaction RNA(n) + a ribonucleoside 5'-triphosphate = RNA(n+1) + diphosphate. Functionally, RNA-dependent RNA polymerase which replicates the viral genome. Catalyzes the transcription of fully conservative plus-strand genomic RNAs that are extruded from the virion into the cytoplasm where they function as mRNAs for translation of viral proteins and also as substrates for encapsidation to form new virions. Once encapsidated, the positive strand is converted to dsRNA by the RNA-directed RNA polymerase. Displays ssRNA-binding activity. The sequence is that of Probable RNA-directed RNA polymerase (gag-pol) from Giardia intestinalis (Giardia lamblia).